The following is a 385-amino-acid chain: Eukaryotic translation initiation factor 3 subunit M (385 aa).

A PCI domain is found at N180–H342.

The protein belongs to the eIF-3 subunit M family. Component of the eukaryotic translation initiation factor 3 (eIF-3) complex.

It is found in the cytoplasm. Component of the eukaryotic translation initiation factor 3 (eIF-3) complex, which is involved in protein synthesis of a specialized repertoire of mRNAs and, together with other initiation factors, stimulates binding of mRNA and methionyl-tRNAi to the 40S ribosome. The eIF-3 complex specifically targets and initiates translation of a subset of mRNAs involved in cell proliferation. The sequence is that of Eukaryotic translation initiation factor 3 subunit M from Anopheles gambiae (African malaria mosquito).